We begin with the raw amino-acid sequence, 302 residues long: Quinolinate synthase (302 aa).

Iminosuccinate is bound by residues histidine 24 and serine 41. Cysteine 86 serves as a coordination point for [4Fe-4S] cluster. Iminosuccinate contacts are provided by residues 112 to 114 and serine 129; that span reads YVN. Cysteine 171 contacts [4Fe-4S] cluster. Residues 197–199 and threonine 214 contribute to the iminosuccinate site; that span reads HPE. Cysteine 259 lines the [4Fe-4S] cluster pocket.

It belongs to the quinolinate synthase family. Type 2 subfamily. [4Fe-4S] cluster serves as cofactor.

The protein localises to the cytoplasm. It catalyses the reaction iminosuccinate + dihydroxyacetone phosphate = quinolinate + phosphate + 2 H2O + H(+). The protein operates within cofactor biosynthesis; NAD(+) biosynthesis; quinolinate from iminoaspartate: step 1/1. Catalyzes the condensation of iminoaspartate with dihydroxyacetone phosphate to form quinolinate. The sequence is that of Quinolinate synthase from Dehalococcoides mccartyi (strain ATCC BAA-2266 / KCTC 15142 / 195) (Dehalococcoides ethenogenes (strain 195)).